A 131-amino-acid polypeptide reads, in one-letter code: Small ribosomal subunit protein uS8 (131 aa).

Belongs to the universal ribosomal protein uS8 family. In terms of assembly, part of the 30S ribosomal subunit. Contacts proteins S5 and S12.

Functionally, one of the primary rRNA binding proteins, it binds directly to 16S rRNA central domain where it helps coordinate assembly of the platform of the 30S subunit. This Blochmanniella pennsylvanica (strain BPEN) protein is Small ribosomal subunit protein uS8.